A 197-amino-acid chain; its full sequence is Probable molybdenum cofactor guanylyltransferase (197 aa).

Residues 12–14 (LAG), Lys-24, Asp-71, and Asp-103 each bind GTP. Asp-103 serves as a coordination point for Mg(2+).

The protein belongs to the MobA family. Mg(2+) serves as cofactor.

Its subcellular location is the cytoplasm. It carries out the reaction Mo-molybdopterin + GTP + H(+) = Mo-molybdopterin guanine dinucleotide + diphosphate. Transfers a GMP moiety from GTP to Mo-molybdopterin (Mo-MPT) cofactor (Moco or molybdenum cofactor) to form Mo-molybdopterin guanine dinucleotide (Mo-MGD) cofactor. This chain is Probable molybdenum cofactor guanylyltransferase, found in Mycobacterium avium (strain 104).